The sequence spans 59 residues: Large ribosomal subunit protein uL30 (59 aa).

This sequence belongs to the universal ribosomal protein uL30 family. In terms of assembly, part of the 50S ribosomal subunit.

The chain is Large ribosomal subunit protein uL30 from Psychrobacter arcticus (strain DSM 17307 / VKM B-2377 / 273-4).